The primary structure comprises 100 residues: Tuberoinfundibular peptide of 39 residues (100 aa).

Residues 1 to 30 form the signal peptide; it reads METRQVSRSPRVRLLLLLLLLLVVPWGVRT. Positions 31–59 are excised as a propeptide; sequence ASGVALPPVGVLSLRPPGRAWADPATPRP.

The protein belongs to the parathyroid hormone family. As to quaternary structure, ligand of high affinity for the PTH2 receptor (PTH2R).

The protein localises to the secreted. Its function is as follows. Plays a role as a potent and selective agonist of PTH2R resulting in adenyl cyclase activation and intracellular calcium levels elevation. Induces protein kinase C beta activation, recruitment of beta-arrestin and PTH2R internalization. May inhibit cell proliferation via its action of PTH2R activation. Neuropeptide which may also have a role in spermatogenesis. May activate nociceptors and nociceptive circuits. The polypeptide is Tuberoinfundibular peptide of 39 residues (PTH2) (Bos taurus (Bovine)).